Reading from the N-terminus, the 372-residue chain is Aminomethyltransferase (372 aa).

The protein belongs to the GcvT family. In terms of assembly, the glycine cleavage system is composed of four proteins: P, T, L and H.

The catalysed reaction is N(6)-[(R)-S(8)-aminomethyldihydrolipoyl]-L-lysyl-[protein] + (6S)-5,6,7,8-tetrahydrofolate = N(6)-[(R)-dihydrolipoyl]-L-lysyl-[protein] + (6R)-5,10-methylene-5,6,7,8-tetrahydrofolate + NH4(+). The glycine cleavage system catalyzes the degradation of glycine. This chain is Aminomethyltransferase, found in Streptomyces avermitilis (strain ATCC 31267 / DSM 46492 / JCM 5070 / NBRC 14893 / NCIMB 12804 / NRRL 8165 / MA-4680).